The chain runs to 223 residues: uncharacterized protein (223 aa).

This is an uncharacterized protein from Aquifex aeolicus (strain VF5).